The following is a 235-amino-acid chain: Putative 4'-phosphopantetheinyl transferase HI_0152 (235 aa).

Mg(2+) is bound by residues Asp-112, Glu-114, and Glu-155.

The protein belongs to the P-Pant transferase superfamily. Gsp/Sfp/HetI/AcpT family. Requires Mg(2+) as cofactor.

In terms of biological role, may transfer the 4'-phosphopantetheine moiety from coenzyme A (CoA) to a serine residue of a carrier protein domain. This chain is Putative 4'-phosphopantetheinyl transferase HI_0152, found in Haemophilus influenzae (strain ATCC 51907 / DSM 11121 / KW20 / Rd).